We begin with the raw amino-acid sequence, 232 residues long: Uracil-DNA glycosylase (232 aa).

Asp-66 acts as the Proton acceptor in catalysis.

This sequence belongs to the uracil-DNA glycosylase (UDG) superfamily. UNG family.

It is found in the cytoplasm. It catalyses the reaction Hydrolyzes single-stranded DNA or mismatched double-stranded DNA and polynucleotides, releasing free uracil.. Excises uracil residues from the DNA which can arise as a result of misincorporation of dUMP residues by DNA polymerase or due to deamination of cytosine. The sequence is that of Uracil-DNA glycosylase from Lactobacillus helveticus (strain DPC 4571).